The sequence spans 2300 residues: Protein hobbit (2300 aa).

The N-terminal stretch at 1-21 is a signal peptide; that stretch reads MMLQLLLFCLALFIFVYWVLP. The interval 23–117 is transmembrane domain; sequence GISWYLVKRF…LRRTQTLAGK (95 aa). Disordered regions lie at residues 269 to 290 and 2111 to 2148; these read TSTG…RSYD and VSDE…GKKG. Positions 270–282 are enriched in polar residues; the sequence is STGQPSRRSTQGL. A required for endoplasmic reticulum-cell membrane contact sites location and binding to phosphatidylinositols region spans residues 1750-2300; that stretch reads VVSETVGAFL…ASSGKRSGND (551 aa). The span at 2119-2140 shows a compositional bias: low complexity; sequence ASTSSASTTNLQAKSSTSSSTK.

It is found in the cell membrane. The protein localises to the endoplasmic reticulum membrane. Its subcellular location is the mitochondrion membrane. Functionally, tube-forming lipid transport protein which binds to phosphatidylinositols and affects phosphatidylinositol-4,5-bisphosphate (PtdIns-4,5-P2) distribution. This chain is Protein hobbit, found in Drosophila melanogaster (Fruit fly).